The primary structure comprises 131 residues: Small ribosomal subunit protein uS8 (131 aa).

It belongs to the universal ribosomal protein uS8 family. In terms of assembly, part of the 30S ribosomal subunit. Contacts proteins S5 and S12.

Its function is as follows. One of the primary rRNA binding proteins, it binds directly to 16S rRNA central domain where it helps coordinate assembly of the platform of the 30S subunit. The sequence is that of Small ribosomal subunit protein uS8 from Nautilia profundicola (strain ATCC BAA-1463 / DSM 18972 / AmH).